The primary structure comprises 457 residues: Multidrug resistance protein MdtK (457 aa).

Residues 1 to 10 (MQKYISEARL) are Cytoplasmic-facing. Residues 11–31 (LLALAIPVILAQIAQTAMGFV) form a helical membrane-spanning segment. The Periplasmic segment spans residues 32-52 (DTVMAGGYSATDMAAVAIGTS). The chain crosses the membrane as a helical span at residues 53–73 (IWLPAILFGHGLLLALTPVIA). At 74-92 (QLNGSGRRERIAHQVRQGF) the chain is on the cytoplasmic side. Residues 93 to 113 (WLAGFVSVLIMLVLWNAGYII) traverse the membrane as a helical segment. The Periplasmic portion of the chain corresponds to 114 to 126 (RSMENIDPALADK). A helical transmembrane segment spans residues 127 to 147 (AVGYLRALLWGAPGYLFFQVA). The Cytoplasmic segment spans residues 148–159 (RNQCEGLAKTKP). Residues 160–180 (GMVMGFIGLLVNIPVNYIFIY) traverse the membrane as a helical segment. The Periplasmic segment spans residues 181-188 (GHFGMPEL). Residues 189–209 (GGVGCGVATAAVYWVMFLAMV) traverse the membrane as a helical segment. The Cytoplasmic portion of the chain corresponds to 210 to 242 (SYIKRARSMRDIRNEKGTAKPDPAVMKRLIQLG). A helical transmembrane segment spans residues 243–263 (LPIALALFFEVTLFAVVALLV). The Periplasmic segment spans residues 264 to 275 (SPLGIVDVAGHQ). Residues 276 to 296 (IALNFSSLMFVLPMSLAAAVT) form a helical membrane-spanning segment. Residues 297 to 313 (IRVGYRLGQGSTLDAQT) lie on the Cytoplasmic side of the membrane. A helical membrane pass occupies residues 314 to 334 (AARTGLMVGVCMATLTAIFTV). Over 335–349 (SLREQIALLYNDNPE) the chain is Periplasmic. A helical transmembrane segment spans residues 350 to 370 (VVTLAAHLMLLAAVYQISDSI). Topologically, residues 371 to 386 (QVIGSGILRGYKDTRS) are cytoplasmic. Residues 387-407 (IFYITFTAYWVLGLPSGYILA) traverse the membrane as a helical segment. The Periplasmic segment spans residues 408–417 (LTDLVVEPMG). The helical transmembrane segment at 418 to 438 (PAGFWIGFIIGLTSAAIMMML) threads the bilayer. Residues 439–457 (RMRFLQRMPSAIILQRASR) are Cytoplasmic-facing.

It belongs to the multi antimicrobial extrusion (MATE) (TC 2.A.66.1) family. MdtK subfamily.

It localises to the cell inner membrane. Functionally, multidrug efflux pump that functions probably as a Na(+)/drug antiporter. This chain is Multidrug resistance protein MdtK, found in Shigella boydii serotype 4 (strain Sb227).